Here is a 501-residue protein sequence, read N- to C-terminus: GMP synthase [glutamine-hydrolyzing] (501 aa).

The Glutamine amidotransferase type-1 domain maps to 1 to 185; it reads MVLVVDYGSQ…LFNVCKLEKN (185 aa). Cys-75 functions as the Nucleophile in the catalytic mechanism. Residues His-159 and Glu-161 contribute to the active site. In terms of domain architecture, GMPS ATP-PPase spans 186–376; sequence WKIGDLVEEK…LGIPDRIINR (191 aa). 213-219 lines the ATP pocket; sequence SGGVDSS.

Homodimer.

The enzyme catalyses XMP + L-glutamine + ATP + H2O = GMP + L-glutamate + AMP + diphosphate + 2 H(+). The protein operates within purine metabolism; GMP biosynthesis; GMP from XMP (L-Gln route): step 1/1. Catalyzes the synthesis of GMP from XMP. The polypeptide is GMP synthase [glutamine-hydrolyzing] (guaA) (Thermotoga maritima (strain ATCC 43589 / DSM 3109 / JCM 10099 / NBRC 100826 / MSB8)).